The following is a 420-amino-acid chain: Protein TabA (420 aa).

An N6-(pyridoxal phosphate)lysine modification is found at Lys57.

This sequence belongs to the Orn/Lys/Arg decarboxylase class-II family. Pyridoxal 5'-phosphate is required as a cofactor.

Functionally, involved in tabtoxin production and pathogenicity. The protein is Protein TabA (tabA) of Pseudomonas amygdali pv. tabaci (Pseudomonas syringae pv. tabaci).